A 534-amino-acid polypeptide reads, in one-letter code: Coiled-coil domain-containing protein 183 (534 aa).

Coiled coils occupy residues 10–54 (EAQI…NLRR), 136–209 (DATK…DMTV), and 321–406 (RFLA…LLVI).

The chain is Coiled-coil domain-containing protein 183 (Ccdc183) from Mus musculus (Mouse).